The primary structure comprises 641 residues: Protein TIC 62, chloroplastic (641 aa).

Residues 1–63 (MEGTCFLRGQ…LSLRASGPIR (63 aa)) constitute a chloroplast transit peptide. N-acetylalanine is present on alanine 64. Residue 84–113 (VFVAGATGKVGSRTVRELLKLGFRVRAGVR) coordinates NADP(+). The segment at 328-641 (SKRPYVPPPK…SPLPSPVTNH (314 aa)) is disordered. Over residues 359–372 (APKEDEAPPKEKNV) the composition is skewed to basic and acidic residues. 2 consecutive repeat copies span residues 376–397 (PLSP…PNST) and 444–465 (PLSP…PTAS). A 4 X 22 AA approximate repeats region spans residues 376 to 638 (PLSPYASYED…PPTSPLPSPV (263 aa)). Residues 393–402 (IPNSTTSVSP) show a composition bias toward low complexity. Residues 435-444 (KQVEEKKERP) are compositionally biased toward basic and acidic residues. Over residues 485-528 (SSTVAKTVTETAVATSVTETSVATSVPETAVATSVTETAAPATS) the composition is skewed to low complexity. The stretch at 532–553 (PLSPYAIYADLKPPTSPTPAST) is repeat 3. Residues 599–612 (AIDTSLASGDNTAQ) are compositionally biased toward polar residues. Copy 4 of the repeat occupies 617 to 638 (PLSPYTMYADMKPPTSPLPSPV). The span at 630-641 (PTSPLPSPVTNH) shows a compositional bias: pro residues.

As to quaternary structure, part of the Tic complex. Interacts with TIC110 and TIC55. Interacts with LFNR1 and LFNR2. Component of high molecular weight thylakoid LFNRs-containing protein complexes containing LIR1, LFNR1, LFNR2, TIC62 and TROL proteins. In terms of tissue distribution, expressed in cotyledons and leaves, but not in roots.

It is found in the plastid. The protein resides in the chloroplast inner membrane. The protein localises to the chloroplast stroma. Its subcellular location is the chloroplast thylakoid. Its function is as follows. Involved in protein precursor import into chloroplasts. Part of the redox regulon consisting of TIC32, TIC 55 and TIC62. Acts as a membrane anchor of LFNR1 and LFNR2. Has a NADPH-dependent dehydrogenase activity, but only after preincubation with lipids. This chain is Protein TIC 62, chloroplastic, found in Arabidopsis thaliana (Mouse-ear cress).